We begin with the raw amino-acid sequence, 627 residues long: RNA interference defective protein 10 (627 aa).

Disordered regions lie at residues 1 to 31, 467 to 487, and 523 to 589; these read MSNH…VRQN, QRDT…HDQY, and SSVR…SEDY. Basic and acidic residues-rich tracts occupy residues 7-16, 467-478, and 526-537; these read NFRDYQREGI, QRDTDEQYDVHQ, and REPEHPSARSRD.

This sequence belongs to the maelstrom family. Interacts with rde-11 (via RING-type zinc finger domain). Interacts with ergo-1.

Functionally, in complex with rde-11, required in the endogenous and exogenous siRNA pathway for biogenesis and accumulation of secondary small interfering RNA (siRNA) intermediates, such as 22G-siRNAs derived from ergo-1 targets. The sequence is that of RNA interference defective protein 10 from Caenorhabditis elegans.